The primary structure comprises 370 residues: Probable butyrate kinase (370 aa).

It belongs to the acetokinase family.

The protein resides in the cytoplasm. It carries out the reaction butanoate + ATP = butanoyl phosphate + ADP. The sequence is that of Probable butyrate kinase from Elusimicrobium minutum (strain Pei191).